A 111-amino-acid chain; its full sequence is Cytochrome c (111 aa).

N-acetylalanine is present on alanine 1. Heme c contacts are provided by cysteine 22, cysteine 25, and histidine 26. Residue lysine 80 is modified to N6,N6,N6-trimethyllysine. Methionine 88 is a binding site for heme c. Lysine 94 is subject to N6,N6,N6-trimethyllysine.

This sequence belongs to the cytochrome c family. In terms of processing, binds 1 heme c group covalently per subunit.

It localises to the mitochondrion intermembrane space. In terms of biological role, electron carrier protein. The oxidized form of the cytochrome c heme group can accept an electron from the heme group of the cytochrome c1 subunit of cytochrome reductase. Cytochrome c then transfers this electron to the cytochrome oxidase complex, the final protein carrier in the mitochondrial electron-transport chain. This chain is Cytochrome c, found in Nigella damascena (Love-in-a-mist).